The chain runs to 194 residues: UPF0301 protein FTM_0963 (194 aa).

This sequence belongs to the UPF0301 (AlgH) family.

This Francisella tularensis subsp. mediasiatica (strain FSC147) protein is UPF0301 protein FTM_0963.